Here is a 195-residue protein sequence, read N- to C-terminus: MAAESIDAELRLGLPGSGGGDGVAAKKRRSASSTVKSEASGTACCGGAGARDVEDGASPASKVQVVGWPPVGSYRRSTFQSSSSSTAAAAKGKGGGETDQGRKNKGGGLYVKVSMDGAPYLRKVDLRMYGGYRELRDALDALFGCFSADASASAAHFAVAYEDKDGDLMLAGDVPWDMFISSCKKLRIMRGSEAR.

Disordered regions lie at residues 1–61 (MAAE…SPAS) and 85–107 (STAA…NKGG). Positions 10–14 (LRLGL) match the EAR-like (transcriptional repression) motif. One can recognise a PB1 domain in the interval 108 to 191 (GLYVKVSMDG…SCKKLRIMRG (84 aa)).

It belongs to the Aux/IAA family. Homodimers and heterodimers. As to expression, highly expressed in flowers. Expressed in etiolated seedlings.

It is found in the nucleus. Aux/IAA proteins are short-lived transcriptional factors that function as repressors of early auxin response genes at low auxin concentrations. This Oryza sativa subsp. japonica (Rice) protein is Auxin-responsive protein IAA14 (IAA14).